The sequence spans 397 residues: uncharacterized protein (397 aa).

Transmembrane regions (helical) follow at residues 142-162, 191-211, 242-258, and 260-280; these read WETI…VGIA, SQLL…SVVL, ALTG…TYFL, and APWL…SAGF.

The protein belongs to the cation diffusion facilitator (CDF) transporter (TC 2.A.4) family. SLC30A subfamily.

Its subcellular location is the membrane. This is an uncharacterized protein from Schizosaccharomyces pombe (strain 972 / ATCC 24843) (Fission yeast).